The chain runs to 316 residues: Acetaldehyde dehydrogenase (316 aa).

Residue 11 to 14 (SGNI) participates in NAD(+) binding. The Acyl-thioester intermediate role is filled by Cys-131. Residues 162–170 (SAGPGTRAN) and Asn-289 each bind NAD(+).

Belongs to the acetaldehyde dehydrogenase family. As to quaternary structure, interacts with MhpE.

The catalysed reaction is acetaldehyde + NAD(+) + CoA = acetyl-CoA + NADH + H(+). It functions in the pathway aromatic compound metabolism; 3-phenylpropanoate degradation. Catalyzes the conversion of acetaldehyde to acetyl-CoA, using NAD(+) and coenzyme A. Is the final enzyme in the meta-cleavage pathway for the degradation of aromatic compounds. The sequence is that of Acetaldehyde dehydrogenase from Shigella sonnei (strain Ss046).